Reading from the N-terminus, the 384-residue chain is Glycerol 3-phosphate oxidase (384 aa).

The first 15 residues, 1–15, serve as a signal peptide directing secretion; sequence METRDVLIVGGGVIG. FAD is bound at residue I14. Residue C16 is the site of N-palmitoyl cysteine attachment. C16 carries the S-diacylglycerol cysteine lipid modification. FAD-binding positions include E33, 42–43, and 47–49; these read TS and SGV. Sn-glycerol 3-phosphate-binding residues include S47 and H51. The Proton acceptor role is filled by H51. V177 serves as a coordination point for FAD. Sn-glycerol 3-phosphate contacts are provided by K258 and R320. Residue 346 to 347 participates in FAD binding; that stretch reads MK. S348 contacts sn-glycerol 3-phosphate. Residue T352 participates in FAD binding.

In terms of assembly, monomer. Requires FAD as cofactor.

It localises to the cytoplasm. Its subcellular location is the cell membrane. It catalyses the reaction sn-glycerol 3-phosphate + O2 = dihydroxyacetone phosphate + H2O2. Its pathway is polyol metabolism; glycerol degradation via glycerol kinase pathway; glycerone phosphate from sn-glycerol 3-phosphate (aerobic route): step 1/1. Catalyzes the oxidation of glycerol 3-phosphate to dihydroxyacetone phosphate (DHAP), with a reduction of O2 to H2O2. The formation of hydrogen peroxide by this enzyme is crucial for cytotoxic effects of M.pneumoniae on host cells. Is involved in the metabolism of glycerol and is essential for glycerol utilization; glycerol is one of the few carbon sources that can be utilized by M.pneumoniae for growth. To a lesser extent, is also able to use glyceraldehyde 3-phosphate (GAP), an intermediate in the glycolysis pathway, as a substrate (but the structure of the product has not been elucidated). Therefore, in the absence of glycerol, GAP may serve as a substrate in the GlpO reaction to supply H2O2 during mycoplasma infection. Does not show any dehydrogenase activity with NAD(+). This chain is Glycerol 3-phosphate oxidase, found in Mycoplasma pneumoniae (strain ATCC 29342 / M129 / Subtype 1) (Mycoplasmoides pneumoniae).